We begin with the raw amino-acid sequence, 238 residues long: MEIENEQICTCIAQILHLLNSLIITFSDDDKTETGQSFVYIDGFLVKKHNNQHTIVNFETYKNKMKVSDRRKFEKANFDEFESALNNKNDLVHCPSITLFESIPTEVRSFYEDEKSGLIKVVKFRTGAMDRKRSFEKIVISVMVGKNVQKFLTFVEDEPDFQGGPIPSKYLIPKKINLMVYTLFQVHTLKFNRKDYDTLSLFYLNRGYYNELSFPCPGTLSRNSECQAERQLYDAYFH.

Belongs to the helicase family. Yeast subtelomeric Y' repeat subfamily.

This is an uncharacterized protein from Saccharomyces cerevisiae (strain ATCC 204508 / S288c) (Baker's yeast).